Here is a 162-residue protein sequence, read N- to C-terminus: NADH-quinone oxidoreductase subunit I (162 aa).

4Fe-4S ferredoxin-type domains are found at residues 54-83 and 93-122; these read RRYE…IESE and TRYD…ETHI. Residues C63, C66, C69, C73, C102, C105, C108, and C112 each contribute to the [4Fe-4S] cluster site.

It belongs to the complex I 23 kDa subunit family. In terms of assembly, NDH-1 is composed of 14 different subunits. Subunits NuoA, H, J, K, L, M, N constitute the membrane sector of the complex. The cofactor is [4Fe-4S] cluster.

It is found in the cell inner membrane. The catalysed reaction is a quinone + NADH + 5 H(+)(in) = a quinol + NAD(+) + 4 H(+)(out). In terms of biological role, NDH-1 shuttles electrons from NADH, via FMN and iron-sulfur (Fe-S) centers, to quinones in the respiratory chain. The immediate electron acceptor for the enzyme in this species is believed to be ubiquinone. Couples the redox reaction to proton translocation (for every two electrons transferred, four hydrogen ions are translocated across the cytoplasmic membrane), and thus conserves the redox energy in a proton gradient. This is NADH-quinone oxidoreductase subunit I from Paraburkholderia xenovorans (strain LB400).